A 642-amino-acid chain; its full sequence is Bifunctional protein glk (642 aa).

The tract at residues 1-340 (MSTGAQSKAA…QLSNRSGGAS (340 aa)) is glucokinase. Position 23–28 (23–28 (ADVGGT)) interacts with ATP. The HTH rpiR-type domain occupies 341–417 (SAVFERIRQM…LKLATGLTGT (77 aa)). The segment at 341–642 (SAVFERIRQM…SPAAKDVARD (302 aa)) is putative HTH-type transcriptional regulator. Residues 377–396 (IVDIARKADVSQPTVIRFCR) constitute a DNA-binding region (H-T-H motif). Positions 461–600 (AIEILNGARR…AVGVAIRRAS (140 aa)) constitute an SIS domain. The helical transmembrane segment at 576 to 596 (SMISRILHLLMIDILAVGVAI) threads the bilayer.

The protein in the N-terminal section; belongs to the bacterial glucokinase family.

It is found in the membrane. It catalyses the reaction D-glucose + ATP = D-glucose 6-phosphate + ADP + H(+). The protein is Bifunctional protein glk (glk) of Burkholderia lata (strain ATCC 17760 / DSM 23089 / LMG 22485 / NCIMB 9086 / R18194 / 383).